The sequence spans 340 residues: Aliphatic sulfonates import ATP-binding protein SsuB 1 (340 aa).

Positions 44 to 72 (THHHARVAAQGHARGDAQPPAGALARDDG) are disordered. In terms of domain architecture, ABC transporter spans 80-299 (VQLRGVGKRY…ARASAGFAAL (220 aa)). 112–119 (GRSGCGKS) provides a ligand contact to ATP.

Belongs to the ABC transporter superfamily. Aliphatic sulfonates importer (TC 3.A.1.17.2) family. As to quaternary structure, the complex is composed of two ATP-binding proteins (SsuB), two transmembrane proteins (SsuC) and a solute-binding protein (SsuA).

Its subcellular location is the cell inner membrane. It carries out the reaction ATP + H2O + aliphatic sulfonate-[sulfonate-binding protein]Side 1 = ADP + phosphate + aliphatic sulfonateSide 2 + [sulfonate-binding protein]Side 1.. Its function is as follows. Part of the ABC transporter complex SsuABC involved in aliphatic sulfonates import. Responsible for energy coupling to the transport system. This is Aliphatic sulfonates import ATP-binding protein SsuB 1 from Paraburkholderia xenovorans (strain LB400).